A 348-amino-acid chain; its full sequence is Ion-translocating oxidoreductase complex subunit D (348 aa).

5 consecutive transmembrane segments (helical) span residues 19 to 39, 41 to 61, 66 to 86, 87 to 107, and 122 to 142; these read FMLWVIVAMLPALIVQIAFFG, GVVIQLAIALSMAIVIEIVVA, KSTTFYLADLAGVVTATILAM, AIPPYAPYWVVMIGMIVALLL, and PAMVAYAFLLISFPVQMTSWL. T186 is subject to FMN phosphoryl threonine. A run of 5 helical transmembrane segments spans residues 212 to 232, 236 to 256, 265 to 285, 291 to 311, and 315 to 335; these read IFARGWLQLNLAFLAGGLFLL, IIHWQIPVAMLVVFSVLSALT, LNVLSQLFSGAMMFGAFFIAT, SITPKGKLIFGGLIGLLAYLI, and GSYPDAIAFAVLLANLCVPLI.

It belongs to the NqrB/RnfD family. As to quaternary structure, the complex is composed of six subunits: RnfA, RnfB, RnfC, RnfD, RnfE and RnfG. FMN is required as a cofactor.

It is found in the cell inner membrane. Its function is as follows. Part of a membrane-bound complex that couples electron transfer with translocation of ions across the membrane. The polypeptide is Ion-translocating oxidoreductase complex subunit D (Haemophilus ducreyi (strain 35000HP / ATCC 700724)).